A 206-amino-acid polypeptide reads, in one-letter code: Ribosomal RNA small subunit methyltransferase G (206 aa).

Residues Gly-74, Leu-79, 125-126, and Arg-140 each bind S-adenosyl-L-methionine; that span reads VE.

This sequence belongs to the methyltransferase superfamily. RNA methyltransferase RsmG family.

The protein resides in the cytoplasm. It catalyses the reaction guanosine(527) in 16S rRNA + S-adenosyl-L-methionine = N(7)-methylguanosine(527) in 16S rRNA + S-adenosyl-L-homocysteine. Specifically methylates the N7 position of guanine in position 527 of 16S rRNA. The polypeptide is Ribosomal RNA small subunit methyltransferase G (Shewanella sp. (strain ANA-3)).